The following is a 311-amino-acid chain: Probable protein phosphatase 2C 59 (311 aa).

Residues 1–14 (MGYLNSVLSSSSQV) are compositionally biased toward low complexity. Residues 1 to 26 (MGYLNSVLSSSSQVHSDDGPVSGGGL) form a disordered region. One can recognise a PPM-type phosphatase domain in the interval 33–279 (SYGYASSPGK…DNITCVVVRF (247 aa)). Mn(2+)-binding residues include D69, G70, D231, and D270.

Belongs to the PP2C family. In terms of assembly, interacts with the Pseudomonas syringae pv. maculicola effector HopW1-1 (via C-terminus). The cofactor is Mg(2+). Mn(2+) serves as cofactor.

The enzyme catalyses O-phospho-L-seryl-[protein] + H2O = L-seryl-[protein] + phosphate. It carries out the reaction O-phospho-L-threonyl-[protein] + H2O = L-threonyl-[protein] + phosphate. With respect to regulation, inhibited by sodium fluoride (NaF). Protein phosphatase that modulates defense response to pathogenic bacteria, conferring resistance and promoting salicylic acid (SA) accumulation. The polypeptide is Probable protein phosphatase 2C 59 (WIN2) (Arabidopsis thaliana (Mouse-ear cress)).